The sequence spans 226 residues: Reticulon-like protein B16 (226 aa).

The Reticulon domain occupies 41–224; the sequence is AADLLLWRRR…RLSWSLSKDK (184 aa). The next 3 helical transmembrane spans lie at 54–74, 75–95, and 149–169; these read LGVIIISTVAWLIFEFSGLPF, LSVSSDVLLIVIMISFVHARV, and VVICLWLLSAIGSYISLCTLL.

It is found in the endoplasmic reticulum membrane. This chain is Reticulon-like protein B16 (RTNLB16), found in Arabidopsis thaliana (Mouse-ear cress).